We begin with the raw amino-acid sequence, 31 residues long: Cytochrome b6-f complex subunit 6 (31 aa).

The helical transmembrane segment at 4–24 threads the bilayer; the sequence is VISYFGFLLVALAFTLVTYLG.

The protein belongs to the PetL family. As to quaternary structure, the 4 large subunits of the cytochrome b6-f complex are cytochrome b6, subunit IV (17 kDa polypeptide, PetD), cytochrome f and the Rieske protein, while the 4 small subunits are PetG, PetL, PetM and PetN. The complex functions as a dimer.

Its subcellular location is the plastid. It localises to the chloroplast thylakoid membrane. Its function is as follows. Component of the cytochrome b6-f complex, which mediates electron transfer between photosystem II (PSII) and photosystem I (PSI), cyclic electron flow around PSI, and state transitions. PetL is important for photoautotrophic growth as well as for electron transfer efficiency and stability of the cytochrome b6-f complex. The chain is Cytochrome b6-f complex subunit 6 from Nephroselmis olivacea (Green alga).